The sequence spans 423 residues: Glucose-1-phosphate adenylyltransferase (423 aa).

Residues Tyr-108, Gly-173, 188–189 (EK), and Ser-207 each bind alpha-D-glucose 1-phosphate.

It belongs to the bacterial/plant glucose-1-phosphate adenylyltransferase family. As to quaternary structure, homotetramer.

The catalysed reaction is alpha-D-glucose 1-phosphate + ATP + H(+) = ADP-alpha-D-glucose + diphosphate. The protein operates within glycan biosynthesis; glycogen biosynthesis. Functionally, involved in the biosynthesis of ADP-glucose, a building block required for the elongation reactions to produce glycogen. Catalyzes the reaction between ATP and alpha-D-glucose 1-phosphate (G1P) to produce pyrophosphate and ADP-Glc. This Francisella tularensis subsp. tularensis (strain WY96-3418) protein is Glucose-1-phosphate adenylyltransferase.